The sequence spans 151 residues: Sec-independent protein translocase protein TatB (151 aa).

A helical transmembrane segment spans residues Met1–Gly21. Residues Met66 to Thr151 form a disordered region. Residues Ala93–Ser103 show a composition bias toward basic and acidic residues. Low complexity-rich tracts occupy residues Ala109–Asp122 and Ala133–Thr151.

The protein belongs to the TatB family. As to quaternary structure, the Tat system comprises two distinct complexes: a TatABC complex, containing multiple copies of TatA, TatB and TatC subunits, and a separate TatA complex, containing only TatA subunits. Substrates initially bind to the TatABC complex, which probably triggers association of the separate TatA complex to form the active translocon.

The protein resides in the cell inner membrane. Functionally, part of the twin-arginine translocation (Tat) system that transports large folded proteins containing a characteristic twin-arginine motif in their signal peptide across membranes. Together with TatC, TatB is part of a receptor directly interacting with Tat signal peptides. TatB may form an oligomeric binding site that transiently accommodates folded Tat precursor proteins before their translocation. The polypeptide is Sec-independent protein translocase protein TatB (Bordetella parapertussis (strain 12822 / ATCC BAA-587 / NCTC 13253)).